A 257-amino-acid polypeptide reads, in one-letter code: Putative hydro-lyase BceJ2315_40370 (257 aa).

Belongs to the D-glutamate cyclase family.

This chain is Putative hydro-lyase BceJ2315_40370, found in Burkholderia cenocepacia (strain ATCC BAA-245 / DSM 16553 / LMG 16656 / NCTC 13227 / J2315 / CF5610) (Burkholderia cepacia (strain J2315)).